The following is a 152-amino-acid chain: MRCPYCQHPDSDVIDTRKLHNGETIRRRRKCEACGRRFTTYERVETVSITVVKKNGEREPYEREKLMRGVRTACYRRPVPAQALESLANDIEAELMALDEPEVPSSLIGDMVMRRLRTIDDVAYIRFASVYRSFADIGKLREAVDELLEQGR.

Residues 3–34 (CPYCQHPDSDVIDTRKLHNGETIRRRRKCEAC) fold into a zinc finger. The 91-residue stretch at 49–139 (ITVVKKNGER…VYRSFADIGK (91 aa)) folds into the ATP-cone domain.

This sequence belongs to the NrdR family. It depends on Zn(2+) as a cofactor.

Its function is as follows. Negatively regulates transcription of bacterial ribonucleotide reductase nrd genes and operons by binding to NrdR-boxes. This is Transcriptional repressor NrdR from Roseiflexus castenholzii (strain DSM 13941 / HLO8).